The primary structure comprises 139 residues: D-ribose pyranase (139 aa).

H20 serves as the catalytic Proton donor. Substrate contacts are provided by residues D28, H106, and 128-130; that span reads YAN.

The protein belongs to the RbsD / FucU family. RbsD subfamily. Homodecamer.

Its subcellular location is the cytoplasm. The catalysed reaction is beta-D-ribopyranose = beta-D-ribofuranose. The protein operates within carbohydrate metabolism; D-ribose degradation; D-ribose 5-phosphate from beta-D-ribopyranose: step 1/2. Catalyzes the interconversion of beta-pyran and beta-furan forms of D-ribose. The chain is D-ribose pyranase from Glaesserella parasuis serovar 5 (strain SH0165) (Haemophilus parasuis).